A 445-amino-acid chain; its full sequence is Hydroxymethylglutaryl-CoA synthase (445 aa).

D31 provides a ligand contact to (3S)-3-hydroxy-3-methylglutaryl-CoA. Residue E83 is the Proton donor/acceptor of the active site. (3S)-3-hydroxy-3-methylglutaryl-CoA-binding residues include C120, T163, S211, H244, K253, N328, and S364. Catalysis depends on C120, which acts as the Acyl-thioester intermediate. Residue H244 is the Proton donor/acceptor of the active site.

This sequence belongs to the thiolase-like superfamily. HMG-CoA synthase family.

The enzyme catalyses acetoacetyl-CoA + acetyl-CoA + H2O = (3S)-3-hydroxy-3-methylglutaryl-CoA + CoA + H(+). The protein operates within metabolic intermediate biosynthesis; (R)-mevalonate biosynthesis; (R)-mevalonate from acetyl-CoA: step 2/3. Its activity is regulated as follows. In contrast to bacterial and eukaryotic HMG-CoA synthases, is insensitive to feedback substrate inhibition by acetoacetyl-CoA. Enzymatic activity is inhibited by hymeglusin, which also blocks the propagation of H.volcanii cells in vivo, indicating the critical role that the mevalonate pathway plays in isoprenoid biosynthesis by these archaea. Catalyzes the condensation of acetyl-CoA with acetoacetyl-CoA to form 3-hydroxy-3-methylglutaryl-CoA (HMG-CoA). Functions in the mevalonate (MVA) pathway leading to isopentenyl diphosphate (IPP), a key precursor for the biosynthesis of isoprenoid compounds such as archaeal membrane lipids. This chain is Hydroxymethylglutaryl-CoA synthase (hmgB), found in Haloferax volcanii (strain ATCC 29605 / DSM 3757 / JCM 8879 / NBRC 14742 / NCIMB 2012 / VKM B-1768 / DS2) (Halobacterium volcanii).